The following is a 139-amino-acid chain: Fluoroacetyl-CoA thioesterase (139 aa).

Substrate-binding positions include 40–50 (FATGFMVGLME) and G69. Active-site residues include T42 and E50. Residues G69 and 76-77 (HT) contribute to the CoA site. H76 is a catalytic residue. R120 serves as a coordination point for substrate.

In terms of assembly, homodimer.

The enzyme catalyses fluoroacetyl-CoA + H2O = fluoroacetate + CoA + H(+). Its function is as follows. Hydrolyzes fluoroacetyl-CoA before it can react with citrate synthase, and thus confers fluoroacetate resistance. Cannot use acetyl-CoA as substrate. The chain is Fluoroacetyl-CoA thioesterase (flK) from Streptantibioticus cattleyicolor (Streptomyces cattleya).